The primary structure comprises 226 residues: Chalcone--flavanone isomerase (226 aa).

Residues Thr51, Asn116, and Ser194 each contribute to the substrate site.

This sequence belongs to the chalcone isomerase family.

It carries out the reaction a chalcone = a flavanone.. It participates in secondary metabolite biosynthesis; flavonoid biosynthesis. Its function is as follows. Catalyzes the intramolecular cyclization of bicyclic chalcones into tricyclic (S)-flavanones. Responsible for the isomerization of 4,2',4',6'-tetrahydroxychalcone (also termed chalcone) into naringenin. This chain is Chalcone--flavanone isomerase (CHI), found in Canna generalis (Canna lily).